A 404-amino-acid chain; its full sequence is CinA-like protein (404 aa).

This sequence belongs to the CinA family.

In Deinococcus radiodurans (strain ATCC 13939 / DSM 20539 / JCM 16871 / CCUG 27074 / LMG 4051 / NBRC 15346 / NCIMB 9279 / VKM B-1422 / R1), this protein is CinA-like protein.